We begin with the raw amino-acid sequence, 320 residues long: Aminoacyl tRNA synthase complex-interacting multifunctional protein 2 (320 aa).

A Phosphoserine modification is found at Ser-36. Residues 82-162 are interaction with PRKN; it reads TPDADLDVTN…HTHSSVKNVP (81 aa). The segment at 162–225 is interaction with TP53; sequence PENLVKCFGE…FLFSLFGQKH (64 aa). Positions 220–317 constitute a GST C-terminal domain; that stretch reads LFGQKHNAVT…NLAPFSTALQ (98 aa).

In terms of assembly, part of the multisynthetase complex (MSC), a multisubunit complex that groups tRNA ligases for Arg (RARS1), Asp (DARS1), Gln (QARS1), Ile (IARS1), Leu (LARS1), Lys (KARS1), Met (MARS1) the bifunctional ligase for Glu and Pro (EPRS1) and the auxiliary subunits AIMP1/p43, AIMP2/p38 and EEF1E1/p18. Interacts (via N-terminus) with KARS1. Interacts with EPRS1. Forms a linear complex that contains MARS1, EEF1E1, EPRS1 and AIMP2 that is at the core of the multisubunit complex. Binds FUBP1 (via C-terminus). Interacts in both its unphosphorylated and phosphorylated forms with p53/TP53 (via N-terminus) in the nucleus following UV irradiation. Interacts (via N-terminus) with PRKN/parkin (via first RING-type domain). Interacts with TARS3. Phosphorylated on serine residues in response to UV irradiation. Post-translationally, ubiquitinated by PRKN, leading to its degradation by the proteasome.

The protein resides in the cytoplasm. It localises to the cytosol. The protein localises to the nucleus. Functionally, required for assembly and stability of the aminoacyl-tRNA synthase complex. Mediates ubiquitination and degradation of FUBP1, a transcriptional activator of MYC, leading to MYC down-regulation which is required for aveolar type II cell differentiation. Blocks MDM2-mediated ubiquitination and degradation of p53/TP53. Functions as a proapoptotic factor. The protein is Aminoacyl tRNA synthase complex-interacting multifunctional protein 2 (Aimp2) of Mus musculus (Mouse).